The following is a 39-amino-acid chain: Natriuretic peptide CnNP-b (39 aa).

A propeptide spanning residues 1-8 is cleaved from the precursor; it reads SGSKTATK. A disulfide bridge links C12 with C28. The interval 20–39 is disordered; the sequence is IGSTSGMGCGGVPKPTPGGS.

It belongs to the natriuretic peptide family. Expressed by the venom gland.

It is found in the secreted. Functionally, snake venom natriuretic peptide that targets both NPR1 and NPR2. Exhibits hypotensive and vasodepressor activities. The protein is Natriuretic peptide CnNP-b of Cryptophis nigrescens (Eastern small-eyed snake).